We begin with the raw amino-acid sequence, 175 residues long: NADH-quinone oxidoreductase subunit I 1 (175 aa).

4Fe-4S ferredoxin-type domains lie at 44-74 and 90-119; these read LNRW…VESA and RVYQ…MIND. [4Fe-4S] cluster-binding residues include Cys54, Cys57, Cys60, Cys64, Cys99, Cys102, Cys105, and Cys109.

This sequence belongs to the complex I 23 kDa subunit family. In terms of assembly, NDH-1 is composed of 14 different subunits. Subunits NuoA, H, J, K, L, M, N constitute the membrane sector of the complex. [4Fe-4S] cluster serves as cofactor.

Its subcellular location is the cell membrane. It catalyses the reaction a quinone + NADH + 5 H(+)(in) = a quinol + NAD(+) + 4 H(+)(out). Its function is as follows. NDH-1 shuttles electrons from NADH, via FMN and iron-sulfur (Fe-S) centers, to quinones in the respiratory chain. The immediate electron acceptor for the enzyme in this species is believed to be menaquinone. Couples the redox reaction to proton translocation (for every two electrons transferred, four hydrogen ions are translocated across the cytoplasmic membrane), and thus conserves the redox energy in a proton gradient. This chain is NADH-quinone oxidoreductase subunit I 1, found in Mycolicibacterium paratuberculosis (strain ATCC BAA-968 / K-10) (Mycobacterium paratuberculosis).